A 336-amino-acid chain; its full sequence is Aspartate--ammonia ligase (336 aa).

The protein belongs to the class-II aminoacyl-tRNA synthetase family. AsnA subfamily.

Its subcellular location is the cytoplasm. It catalyses the reaction L-aspartate + NH4(+) + ATP = L-asparagine + AMP + diphosphate + H(+). Its pathway is amino-acid biosynthesis; L-asparagine biosynthesis; L-asparagine from L-aspartate (ammonia route): step 1/1. The protein is Aspartate--ammonia ligase of Lactobacillus acidophilus (strain ATCC 700396 / NCK56 / N2 / NCFM).